The following is a 48-amino-acid chain: Fimbrial assembly protein, serogroup E2 (48 aa).

This is Fimbrial assembly protein, serogroup E2 (fimB) from Dichelobacter nodosus (Bacteroides nodosus).